A 539-amino-acid chain; its full sequence is Membrane protein insertase YidC (539 aa).

The chain crosses the membrane as a helical span at residues I7–M27. The segment at Q32 to A64 is disordered. The next 3 helical transmembrane spans lie at Y347–W367, G418–L438, and I498–V518.

The protein belongs to the OXA1/ALB3/YidC family. Type 1 subfamily. As to quaternary structure, interacts with the Sec translocase complex via SecD. Specifically interacts with transmembrane segments of nascent integral membrane proteins during membrane integration.

The protein resides in the cell inner membrane. In terms of biological role, required for the insertion and/or proper folding and/or complex formation of integral membrane proteins into the membrane. Involved in integration of membrane proteins that insert both dependently and independently of the Sec translocase complex, as well as at least some lipoproteins. Aids folding of multispanning membrane proteins. The chain is Membrane protein insertase YidC from Nitratidesulfovibrio vulgaris (strain DSM 19637 / Miyazaki F) (Desulfovibrio vulgaris).